Here is a 75-residue protein sequence, read N- to C-terminus: Large ribosomal subunit protein uL29 (75 aa).

This sequence belongs to the universal ribosomal protein uL29 family.

This is Large ribosomal subunit protein uL29 from Ureaplasma urealyticum serovar 10 (strain ATCC 33699 / Western).